A 172-amino-acid polypeptide reads, in one-letter code: Large ribosomal subunit protein bL17m (172 aa).

A mitochondrion-targeting transit peptide spans 1-8 (MRLSFAAA).

It belongs to the bacterial ribosomal protein bL17 family. In terms of assembly, component of the mitochondrial ribosome large subunit (39S) which comprises a 16S rRNA and about 50 distinct proteins.

Its subcellular location is the mitochondrion. This is Large ribosomal subunit protein bL17m (MRPL17) from Bos taurus (Bovine).